The following is a 541-amino-acid chain: Long-chain-fatty-acid--CoA ligase (541 aa).

A Mg(2+)-binding site is contributed by T184. ATP-binding residues include V231 and W234. Residues G302, Q322, G323, and T327 each contribute to the tetradecanoyl-AMP site. Residues G323 and T327 each contribute to the ATP site. E328 provides a ligand contact to Mg(2+). 4 residues coordinate ATP: D418, K435, K439, and W444. D418, K435, and K439 together coordinate tetradecanoyl-AMP.

The protein belongs to the ATP-dependent AMP-binding enzyme family. As to quaternary structure, forms a domain swapped homodimer. Requires Mg(2+) as cofactor.

It carries out the reaction a long-chain fatty acid + ATP + CoA = a long-chain fatty acyl-CoA + AMP + diphosphate. The catalysed reaction is tetradecanoate + ATP + CoA = tetradecanoyl-CoA + AMP + diphosphate. It catalyses the reaction hexadecanoate + ATP + CoA = hexadecanoyl-CoA + AMP + diphosphate. Its pathway is lipid metabolism; fatty acid metabolism. Functionally, catalyzes the esterification of a number of long chain fatty acids with CoA, resulting in the formation of long-chain fatty acyl-CoA. Myristate (C14) is the most efficiently processed fatty acid, followed by palmitate (C16). Also catalyzes the esterification of stearate (C18) and laurate (C12), but at lower efficiency. Does not catalyze the esterification of the unsaturated fatty acids mysteroleic and palmitoleic acids in vitro. The chain is Long-chain-fatty-acid--CoA ligase from Thermus thermophilus (strain ATCC 27634 / DSM 579 / HB8).